The following is a 155-amino-acid chain: 6,7-dimethyl-8-ribityllumazine synthase (155 aa).

5-amino-6-(D-ribitylamino)uracil contacts are provided by residues Phe-24, 58 to 60, and 82 to 84; these read AFE and VII. 87–88 contacts (2S)-2-hydroxy-3-oxobutyl phosphate; sequence ST. The active-site Proton donor is His-90. Phe-115 contributes to the 5-amino-6-(D-ribitylamino)uracil binding site. Arg-129 is a (2S)-2-hydroxy-3-oxobutyl phosphate binding site.

It belongs to the DMRL synthase family.

It catalyses the reaction (2S)-2-hydroxy-3-oxobutyl phosphate + 5-amino-6-(D-ribitylamino)uracil = 6,7-dimethyl-8-(1-D-ribityl)lumazine + phosphate + 2 H2O + H(+). Its pathway is cofactor biosynthesis; riboflavin biosynthesis; riboflavin from 2-hydroxy-3-oxobutyl phosphate and 5-amino-6-(D-ribitylamino)uracil: step 1/2. Its function is as follows. Catalyzes the formation of 6,7-dimethyl-8-ribityllumazine by condensation of 5-amino-6-(D-ribitylamino)uracil with 3,4-dihydroxy-2-butanone 4-phosphate. This is the penultimate step in the biosynthesis of riboflavin. The sequence is that of 6,7-dimethyl-8-ribityllumazine synthase from Pelodictyon phaeoclathratiforme (strain DSM 5477 / BU-1).